The primary structure comprises 519 residues: MEELSSVGEQVFAAECILSKRLRKGKLEYLVKWRGWSSKHNSWEPEENILDPRLLLAFQKKEHEKEVQNRKRGKRPRGRPRKHTVTSSCSRRSKLKEPDAPSKSKSSSSSSSSTSSSSSSDEEEDDSDLDSKRGPRGRETHPVPQKKAQILVAKPELKDPIRKKRGRKPLPPEQKAARRPVSLAKVLKTTRKDLGTSAAKLPPPLSAPVAGLAALKAHTKEACGGPSTMATPENLASLMKGMAGSPSRGGIWQSSIVHYMNRMSQSQVQAASRLALKAQATNKCGLGLDLKVRTQKGGELGGSPAGGKVPKAPGGGAAEQQRGNHSGSPGAQLAPTQELSLQVLDLQSVKNGVPGVGLLARHAPAKAIPATNPATGKGPGSGPTGANMTNAPTDNNKGEKLTCKATALPAPSVKRDTVKSVAASGGQEGHTAPGEGRKPPALSELSTGEENSSSDSDPDSTSLPSAAQNLSVAIQTSQDWKPTRSLIEHVFVTDVTANLITVTVKESPTSVGFFNLRHY.

One can recognise a Chromo domain in the interval 12-70 (FAAECILSKRLRKGKLEYLVKWRGWSSKHNSWEPEENILDPRLLLAFQKKEHEKEVQNR). Basic and acidic residues predominate over residues 60-69 (KKEHEKEVQN). Positions 60–180 (KKEHEKEVQN…PPEQKAARRP (121 aa)) are disordered. Basic residues predominate over residues 70 to 84 (RKRGKRPRGRPRKHT). Positions 75-87 (RPRGRPRKHTVTS) form a DNA-binding region, a.T hook. The span at 103-119 (KSKSSSSSSSSTSSSSS) shows a compositional bias: low complexity. Basic and acidic residues predominate over residues 129–141 (LDSKRGPRGRETH). Residues K147 and K154 each participate in a glycyl lysine isopeptide (Lys-Gly) (interchain with G-Cter in SUMO2) cross-link. A Nuclear localization signal motif is present at residues 164 to 169 (KRGRKP). Position 248 is an asymmetric dimethylarginine; alternate (R248). R248 carries the post-translational modification Omega-N-methylarginine; alternate. Disordered stretches follow at residues 295 to 336 (QKGG…LAPT) and 367 to 464 (AIPA…TSLP). Phosphoserine is present on S303. Composition is skewed to polar residues over residues 321-336 (QRGN…LAPT) and 384-395 (TGANMTNAPTDN). Positions 453–464 (SSDSDPDSTSLP) are enriched in low complexity.

As to quaternary structure, component of a PRC1-like complex. The composition of the PRC1 complex may differ between the PRC1 complex in pluripotent embryonic stem cells containing RNF2, CBX7 and PCGF2, and the PRC1 complex in differentiating cells containing RNF2, CBX2, CBX4 and BMI1. Interacts with RING1/RNF2. Interacts (via chromodomain) with histone H3K9Me3 and H3K27me3. May interact with H3C15 and H3C1. Expressed in embryoid bodies.

Its subcellular location is the nucleus speckle. It localises to the chromosome. Component of a Polycomb group (PcG) multiprotein PRC1-like complex, a complex class required to maintain the transcriptionally repressive state of many genes, including Hox genes, throughout development. PcG PRC1 complex acts via chromatin remodeling and modification of histones; it mediates monoubiquitination of histone H2A 'Lys-119', rendering chromatin heritably changed in its expressibility. Binds to histone H3 trimethylated at 'Lys-9' (H3K9me3) or at 'Lys-27' (H3K27me3). Plays a role in the lineage differentiation of the germ layers in embryonic development. Involved in sexual development, acting as activator of NR5A1 expression. The polypeptide is Chromobox protein homolog 2 (Cbx2) (Mus musculus (Mouse)).